A 157-amino-acid polypeptide reads, in one-letter code: MNDVVKIVEDFIKPHIPKPFELFAVEWEKFGGDMMLSILVDKEGGIEIDETAELSELISPLLDTISPDPFPTEGYLLEVASPGAERPLRKAEHFAGAVGEYIFVKLYQKINNEKEFTGDLVSFDGETLVVDVLDKTRHKNIEIPLSAVAKAQTMVKF.

This sequence belongs to the RimP family.

It is found in the cytoplasm. Functionally, required for maturation of 30S ribosomal subunits. This chain is Ribosome maturation factor RimP, found in Lactococcus lactis subsp. cremoris (strain MG1363).